The sequence spans 89 residues: Luqin-like RYamide peptides lury-1 (89 aa).

A signal peptide spans 1-19; that stretch reads MLTRVPVLILAVIVMLALC. A propeptide spanning residues 20–26 is cleaved from the precursor; that stretch reads QEPEKPE. Tyrosine amide is present on residues tyrosine 35 and tyrosine 43. Residues 47–89 constitute a propeptide that is removed on maturation; that stretch reads SGNLMESSQNSLTEESSDVVCQLIDGKYICLPVDAVRFRPFFL.

As to expression, expressed in the M1 and M2 pharyngeal neurons from where the LURY-1-1 and LURY-1-2 peptides are secreted.

It localises to the secreted. Functionally, acts as a ligand for the npr-22 receptor and controls food-related processes including feeding, lifespan, egg-laying and roaming behavior. Secreted in the presence of food, leading to reduced feeding and roaming behavior and increased egg laying and lifespan. Activity may be latent under normal conditions but induced under conditions that cause hyperactivation of the pharynx such as abrupt refeeding after starvation. This chain is Luqin-like RYamide peptides lury-1, found in Caenorhabditis elegans.